Reading from the N-terminus, the 183-residue chain is Archaemetzincin (183 aa).

H132 serves as a coordination point for Zn(2+). E133 functions as the Proton acceptor in the catalytic mechanism. Zn(2+) is bound by residues H136, H142, C143, C148, C167, and C170.

It belongs to the peptidase M54 family. As to quaternary structure, monomer. It depends on Zn(2+) as a cofactor.

Probable zinc metalloprotease whose natural substrate is unknown. This Aeropyrum pernix (strain ATCC 700893 / DSM 11879 / JCM 9820 / NBRC 100138 / K1) protein is Archaemetzincin.